A 401-amino-acid chain; its full sequence is Glutamyl-tRNA reductase (401 aa).

Substrate-binding positions include T45–R48, S101, E106–Q108, and Q112. C46 functions as the Nucleophile in the catalytic mechanism. G177 to G182 provides a ligand contact to NADP(+).

Belongs to the glutamyl-tRNA reductase family. As to quaternary structure, homodimer.

It catalyses the reaction (S)-4-amino-5-oxopentanoate + tRNA(Glu) + NADP(+) = L-glutamyl-tRNA(Glu) + NADPH + H(+). It participates in porphyrin-containing compound metabolism; protoporphyrin-IX biosynthesis; 5-aminolevulinate from L-glutamyl-tRNA(Glu): step 1/2. Functionally, catalyzes the NADPH-dependent reduction of glutamyl-tRNA(Glu) to glutamate 1-semialdehyde (GSA). The polypeptide is Glutamyl-tRNA reductase (Clostridium botulinum (strain Eklund 17B / Type B)).